Here is a 158-residue protein sequence, read N- to C-terminus: UPF0102 protein GbCGDNIH1_0975 (158 aa).

The protein belongs to the UPF0102 family.

This is UPF0102 protein GbCGDNIH1_0975 from Granulibacter bethesdensis (strain ATCC BAA-1260 / CGDNIH1).